The following is a 141-amino-acid chain: Hemoglobin subunit alpha-A (141 aa).

Residues 1-141 enclose the Globin domain; that stretch reads VLSGSDKTNV…VGNVLTAKYR (141 aa). O2 is bound at residue His58. His87 is a binding site for heme b.

Belongs to the globin family. Heterotetramer of two alpha chains and two beta chains. Red blood cells.

Its function is as follows. Involved in oxygen transport from the lung to the various peripheral tissues. This chain is Hemoglobin subunit alpha-A (HBAA), found in Chroicocephalus ridibundus (Black-headed gull).